A 475-amino-acid polypeptide reads, in one-letter code: Putative aldehyde dehydrogenase SERP1729 (475 aa).

201 to 207 (GDGSGVG) is an NAD(+) binding site. Residues glutamate 245 and cysteine 279 contribute to the active site.

It belongs to the aldehyde dehydrogenase family.

The enzyme catalyses an aldehyde + NAD(+) + H2O = a carboxylate + NADH + 2 H(+). The protein is Putative aldehyde dehydrogenase SERP1729 of Staphylococcus epidermidis (strain ATCC 35984 / DSM 28319 / BCRC 17069 / CCUG 31568 / BM 3577 / RP62A).